Here is a 493-residue protein sequence, read N- to C-terminus: Probable cytochrome P450 6a13 (493 aa).

Cys435 is a binding site for heme.

Belongs to the cytochrome P450 family. The cofactor is heme.

The protein localises to the endoplasmic reticulum membrane. It localises to the microsome membrane. Its function is as follows. May be involved in the metabolism of insect hormones and in the breakdown of synthetic insecticides. In Drosophila melanogaster (Fruit fly), this protein is Probable cytochrome P450 6a13 (Cyp6a13).